The sequence spans 367 residues: Coiled-coil domain-containing protein 34 (367 aa).

At S55 the chain carries Phosphoserine. Disordered regions lie at residues 77–105 (FPFG…KVES), 191–228 (QKKN…KAKE), and 310–349 (YNPI…SSLA). The segment covering 82-97 (DDSEGEDEEALDEDAR) has biased composition (acidic residues). Coiled-coil stretches lie at residues 87–108 (EDEE…SLEG) and 153–280 (RLQQ…AKNK). Basic and acidic residues predominate over residues 197–228 (ERKEREQKINKEMEEKEAKKREKEHLQEKAKE). Positions 339-349 (ASQPLPSSSLA) are enriched in low complexity.

As to expression, expressed in testis and sperm.

It localises to the cell projection. It is found in the cilium. Its subcellular location is the flagellum. Its function is as follows. Involved in spermatogenesis. Has a probable role in anterograde intraflagellar transport which is essential for the formation of sperm flagella. The protein is Coiled-coil domain-containing protein 34 (Ccdc34) of Mus musculus (Mouse).